The sequence spans 432 residues: Isocitrate lyase (432 aa).

Positions 1 to 24 (MSNVGKPRTAQEIQQDWDTNPRWN) are disordered. Residues 11–22 (QEIQQDWDTNPR) show a composition bias toward polar residues. Residue 93–95 (SGW) participates in substrate binding. Asp-155 contacts Mg(2+). Cys-193 acts as the Proton acceptor in catalysis. Substrate is bound by residues 194–195 (GH), Arg-230, 315–319 (NCSPS), and Thr-349.

It belongs to the isocitrate lyase/PEP mutase superfamily. Isocitrate lyase family. As to quaternary structure, homotetramer. It depends on Mg(2+) as a cofactor.

The catalysed reaction is D-threo-isocitrate = glyoxylate + succinate. Its pathway is carbohydrate metabolism; glyoxylate cycle; (S)-malate from isocitrate: step 1/2. With respect to regulation, inhibited by 3-phosphoglycerate, 6-phosphogluconate, phosphoenolpyruvate (PEP), fructose 1,6-bisphosphate, glycolate, oxalate, and itaconate. In terms of biological role, involved in the metabolic adaptation in response to environmental changes. Catalyzes the reversible formation of succinate and glyoxylate from isocitrate, a key step of the glyoxylate cycle, which operates as an anaplerotic route for replenishing the tricarboxylic acid cycle during growth on fatty acid substrates. This is Isocitrate lyase from Corynebacterium glutamicum (strain ATCC 13032 / DSM 20300 / JCM 1318 / BCRC 11384 / CCUG 27702 / LMG 3730 / NBRC 12168 / NCIMB 10025 / NRRL B-2784 / 534).